A 263-amino-acid chain; its full sequence is 3'-5' ssDNA/RNA exonuclease TatD (263 aa).

The a divalent metal cation site is built by glutamate 92, histidine 128, and histidine 153.

The protein belongs to the metallo-dependent hydrolases superfamily. TatD-type hydrolase family. TatD subfamily. As to quaternary structure, monomer. Requires Mg(2+) as cofactor.

It is found in the cytoplasm. Functionally, 3'-5' exonuclease that prefers single-stranded DNA and RNA. May play a role in the H(2)O(2)-induced DNA damage repair. This Rahnella sp. (strain Y9602) protein is 3'-5' ssDNA/RNA exonuclease TatD.